A 471-amino-acid chain; its full sequence is GTPase Der (471 aa).

EngA-type G domains lie at 3–166 (PTLA…EPEA) and 177–350 (IKLA…SSAT). GTP-binding positions include 9 to 16 (GRPNVGKS), 56 to 60 (DTGGI), 118 to 121 (NKVD), 183 to 190 (GRPNVGKS), 230 to 234 (DTAGV), and 295 to 298 (NKWD). The 85-residue stretch at 351 to 435 (EKLNTNFLTK…PIRFEFKSSE (85 aa)) folds into the KH-like domain. A disordered region spans residues 432 to 471 (KSSENPFAGRKNAMSKKPEHPSRRANSGGKSINRRPRPKS).

The protein belongs to the TRAFAC class TrmE-Era-EngA-EngB-Septin-like GTPase superfamily. EngA (Der) GTPase family. Associates with the 50S ribosomal subunit.

Its function is as follows. GTPase that plays an essential role in the late steps of ribosome biogenesis. This is GTPase Der from Saccharophagus degradans (strain 2-40 / ATCC 43961 / DSM 17024).